We begin with the raw amino-acid sequence, 524 residues long: Cytochrome P450 4F1 (524 aa).

Residues 15–35 traverse the membrane as a helical segment; sequence VAFPWQTLLLFGASWILAQIL. Heme contacts are provided by Glu-328 and Cys-468.

It belongs to the cytochrome P450 family. Requires heme as cofactor. Expressed in liver.

It is found in the endoplasmic reticulum membrane. Its subcellular location is the microsome membrane. The catalysed reaction is (5Z,8Z,11Z,14Z)-eicosatetraenoate + reduced [NADPH--hemoprotein reductase] + O2 = 20-hydroxy-(5Z,8Z,11Z,14Z)-eicosatetraenoate + oxidized [NADPH--hemoprotein reductase] + H2O + H(+). The enzyme catalyses 5-hydroxy-(6E,8Z,11Z,14Z)-eicosatetraenoate + reduced [NADPH--hemoprotein reductase] + O2 = 5,20-dihydroxy-(6E,8Z,11Z,14Z)-eicosatetraenoate + oxidized [NADPH--hemoprotein reductase] + H2O + H(+). It carries out the reaction 8-hydroxy-(5Z,9E,11Z,14Z)-eicosatetraenoate + reduced [NADPH--hemoprotein reductase] + O2 = 8,20-dihydroxy-(5Z,9E,11Z,14Z)-eicosatetraenoate + oxidized [NADPH--hemoprotein reductase] + H2O + H(+). It catalyses the reaction leukotriene B4 + reduced [NADPH--hemoprotein reductase] + O2 = 20-hydroxy-leukotriene B4 + oxidized [NADPH--hemoprotein reductase] + H2O + H(+). The catalysed reaction is 6-trans-leukotriene B4 + reduced [NADPH--hemoprotein reductase] + O2 = 20-hydroxy-6-trans-leukotriene B4 + oxidized [NADPH--hemoprotein reductase] + H2O + H(+). The enzyme catalyses lipoxin A4 + reduced [NADPH--hemoprotein reductase] + O2 = 20-hydroxy-lipoxin A4 + oxidized [NADPH--hemoprotein reductase] + H2O + H(+). Functionally, a cytochrome P450 monooxygenase involved in the metabolism of arachidonic acid and its oxygenated derivatives. Mechanistically, uses molecular oxygen inserting one oxygen atom into a substrate, and reducing the second into a water molecule, with two electrons provided by NADPH via cytochrome P450 reductase (CPR; NADPH-ferrihemoprotein reductase). Participates in the conversion of arachidonic acid to omega-hydroxyeicosatetraenoic acid (20-HETE), a signaling molecule acting both as vasoconstrictive and natriuretic with overall effect on arterial blood pressure. May play a role in the oxidative inactivation of eicosanoids, including both pro-inflammatory and anti-inflammatory mediators such as leukotriene B4 (LTB4), lipoxin A4 (LXA4), and several HETEs. This is Cytochrome P450 4F1 from Rattus norvegicus (Rat).